The sequence spans 72 residues: uncharacterized protein (72 aa).

This is an uncharacterized protein from Bacillus subtilis (strain 168).